Here is a 581-residue protein sequence, read N- to C-terminus: 2-isopropylmalate synthase (581 aa).

The region spanning 32 to 306 is the Pyruvate carboxyltransferase domain; it reads PQWCAVDLRD…DPQLDFSDIK (275 aa). Positions 41, 245, 247, and 281 each coordinate Mg(2+). The segment at 455 to 581 is regulatory domain; it reads RSAPVEQIAL…KHQQLQNGGV (127 aa).

The protein belongs to the alpha-IPM synthase/homocitrate synthase family. LeuA type 2 subfamily. Homodimer. The cofactor is Mg(2+).

The protein localises to the cytoplasm. The enzyme catalyses 3-methyl-2-oxobutanoate + acetyl-CoA + H2O = (2S)-2-isopropylmalate + CoA + H(+). The protein operates within amino-acid biosynthesis; L-leucine biosynthesis; L-leucine from 3-methyl-2-oxobutanoate: step 1/4. Its function is as follows. Catalyzes the condensation of the acetyl group of acetyl-CoA with 3-methyl-2-oxobutanoate (2-ketoisovalerate) to form 3-carboxy-3-hydroxy-4-methylpentanoate (2-isopropylmalate). The protein is 2-isopropylmalate synthase of Corynebacterium efficiens (strain DSM 44549 / YS-314 / AJ 12310 / JCM 11189 / NBRC 100395).